A 1025-amino-acid chain; its full sequence is MQLCARAWGLRLGRGAGGGHRLARGTGLSWAQRSRDSSGGGGGGGGGDRGAAGASRLLERLLPRHDDFSRRHIGPGDKDRREMLQALGLASIDELIEKTVPASIRLKRPLKMEDPICENEILETLHAIASKNQIWRSYIGMGYYNCSVPQTILRNLLENSGWVTQYTPYQPEVSQGRLESLLNYQTMVSDITGLDMANASLLDEATAAAEAMQLCHRHNKRKKFFVDPRCHPQTIAVVQTRAKYRGVLVELKLPHEMDFSGKDVCGVLFQYPDTEGKVEDFTELVDRAHQTGSLTCCATDLLALCILRPPGEFGVDIALGNSQRFGVPLGYGGPHAAFFAVKENLVRMMPGRMVGVTRDATGKEVYRLALQTREQHIRRDKATSNICTAQALLANMAAMFAIYHGSQGLKHIAKRVHNATLILSEGLKRAGHQLQHDLFFDTLKVQCGCSVKEVLGRAAQRQINFRLFDDGTLGISLDETVTEKDLDDLLWIFGCESSAELVAEGMGEERRGLLGSSFKRTSPFLTHQVFNSYHSETNLVRYMKKLENKDISLVHSMIPLGSCTMKLNSSSELAPITWREFANIHPFVPLDQAQGYQQLFQGLEKDLCEITGYDRVSFQPNSGAQGEYAGLATIRAYLDQKGERHRTVCLIPKSAHGTNPASAHMAGMKIQPVEVDRYGNIDVAHLKAMVDQHKENLAAIMITYPSTNGVFEENIGDVCALIHQHGGQVYLDGANMNAQVGICRPGDFGSDVSHLNLHKTFCIPHGGGGPGMGPIGVKKHLSPFLPSHPVISIKPTEGTWPVGTVSAAPWGSSSILPISWAYIKMMGGKGLKEATEIAILNANYMAKRLEKHYRVLFRGARGYVAHEFILDTRPFKKSANVEAVDVAKRLQDYGFHAPTMSWPVAGTLMIEPTESEDKAELDRFCDAMISIRQEIADIEEGRIDPRVNPLKMSPHSLTCVTSSCWDRPYSREVAAFPLPFVKPENKFWPTIARIDDIYGDQHLVCTCPPMEVYESPFSEQKRASS.

A mitochondrion-targeting transit peptide spans 1–35 (MQLCARAWGLRLGRGAGGGHRLARGTGLSWAQRSR). The disordered stretch occupies residues 16-51 (AGGGHRLARGTGLSWAQRSRDSSGGGGGGGGGDRGA). Residues 38–50 (SGGGGGGGGGDRG) are compositionally biased toward gly residues. N6-acetyllysine occurs at positions 452, 519, 653, and 669. Residue K759 is modified to N6-(pyridoxal phosphate)lysine.

It belongs to the GcvP family. As to quaternary structure, interacts with GCSH. Homodimer. The glycine cleavage system is composed of four proteins: P (GLDC), T (GCST), L (DLD) and H (GCSH). Pyridoxal 5'-phosphate serves as cofactor.

The protein localises to the mitochondrion. It catalyses the reaction N(6)-[(R)-lipoyl]-L-lysyl-[glycine-cleavage complex H protein] + glycine + H(+) = N(6)-[(R)-S(8)-aminomethyldihydrolipoyl]-L-lysyl-[glycine-cleavage complex H protein] + CO2. Its activity is regulated as follows. Stimulated by lipoic acid. Inhibited in presence of methylamine. In terms of biological role, the glycine cleavage system catalyzes the degradation of glycine. The P protein (GLDC) binds the alpha-amino group of glycine through its pyridoxal phosphate cofactor; CO(2) is released and the remaining methylamine moiety is then transferred to the lipoamide cofactor of the H protein (GCSH). The chain is Glycine dehydrogenase (decarboxylating), mitochondrial from Mus musculus (Mouse).